The following is a 1040-amino-acid chain: Multidrug resistance protein MdtB (1040 aa).

The next 12 membrane-spanning stretches (helical) occupy residues 25 to 45 (LLMVAILLAGIIGYRFLPVAA), 342 to 362 (DTQFELMLAIALVVMIIYLFL), 369 to 389 (IIPGVAVPLSLIGTFAVMVFL), 396 to 416 (LTLMALTIATGFVVDDAIVVI), 440 to 460 (IGFTIISLTFSLIAVLIPLLF), 472 to 492 (FAVTLAVAILISAVVSLTLTP), 537 to 557 (WLTLSVALGTLLLSIMLWVFI), 863 to 883 (LGSTVWLIVAAVVAMYIVLGV), 888 to 908 (FIHPITILSTLPTAGVGALLA), 911 to 931 (IAGSELDVIAIIGIILLIGIV), 967 to 987 (PILMTTLAALLGALPLMLSTG), and 998 to 1018 (IGMVGGLLVSQVLTLFTTPVI).

It belongs to the resistance-nodulation-cell division (RND) (TC 2.A.6) family. MdtB subfamily. In terms of assembly, part of a tripartite efflux system composed of MdtA, MdtB and MdtC. MdtB forms a heteromultimer with MdtC.

Its subcellular location is the cell inner membrane. The polypeptide is Multidrug resistance protein MdtB (Citrobacter koseri (strain ATCC BAA-895 / CDC 4225-83 / SGSC4696)).